Reading from the N-terminus, the 84-residue chain is uncharacterized protein (84 aa).

This is an uncharacterized protein from Orgyia pseudotsugata (Douglas-fir tussock moth).